Here is a 435-residue protein sequence, read N- to C-terminus: Envelope glycoprotein M (435 aa).

The Intravirion portion of the chain corresponds to 1–36; it reads MGTQKKGPRSEKVSPYDTTTPEVEALDHQMDTLNWR. The helical transmembrane segment at 37-57 threads the bilayer; sequence IWIIQVMMFTLGAVMLLATLI. Topologically, residues 58–111 are virion surface; sequence AASSEYTGIPCFYAAVVDYELFNATLDGGVWSGNRGGYSAPVLFLEPHSVVAFT. A helical transmembrane segment spans residues 112–132; it reads YYTALTAMAMAVYTLITAAII. Over 133-155 the chain is Intravirion; sequence HRETKNQRVRQSSGVAWLVVDPT. The chain crosses the membrane as a helical span at residues 156 to 176; it reads TLFWGLLSLWLLNAVVLLLAY. Topologically, residues 177–178 are virion surface; sequence KQ. The chain crosses the membrane as a helical span at residues 179–199; the sequence is IGVAATLYLGHFATSVIFTTY. Topologically, residues 200–233 are intravirion; sequence FCGRGKLDETNIKAVANLRQQSVFLYRLAGPTRA. The helical transmembrane segment at 234–254 threads the bilayer; sequence VFVNLMAALMAICILFVSLML. At 255 to 265 the chain is on the virion surface side; that stretch reads ELVVANHLHTG. Residues 266 to 288 traverse the membrane as a helical segment; that stretch reads LWSSVSVAMSTFSTLSVVYLIVS. Over 289 to 294 the chain is Intravirion; sequence ELILAH. The helical transmembrane segment at 295 to 317 threads the bilayer; that stretch reads YIHVLIGPSLGTLVACATLGTAA. The Virion surface segment spans residues 318 to 334; it reads HSYMDRLYDPISVQSPR. The helical transmembrane segment at 335–355 threads the bilayer; the sequence is LIPTTRGTLACLAVFSVVMLL. Topologically, residues 356–435 are intravirion; the sequence is LRLMRAYVYH…LYERSNSGWE (80 aa).

Belongs to the herpesviridae glycoprotein M family. In terms of assembly, interacts (via N-terminus) with gN (via N-terminus). The gM-gN heterodimer forms the gCII complex.

The protein localises to the virion membrane. Its subcellular location is the host Golgi apparatus. It localises to the host trans-Golgi network. It is found in the host endosome membrane. The protein resides in the host nucleus inner membrane. Its function is as follows. Envelope glycoprotein important for virion assembly and egress. Plays a role in the correct incorporation of gH-gL into virion membrane. Directs the glycoprotein N (gN) to the host trans-Golgi network. The sequence is that of Envelope glycoprotein M from Homo sapiens (Human).